Reading from the N-terminus, the 497-residue chain is Glutathione hydrolase 6 (497 aa).

A disordered region spans residues 1–34 (MDATTGPVHYHKLQLWEPGVESEEEEEEEEEEIA). Residues 1–51 (MDATTGPVHYHKLQLWEPGVESEEEEEEEEEEIAEPLVLSLRRLQNTPRNE) lie on the Cytoplasmic side of the membrane. Positions 20–34 (VESEEEEEEEEEEIA) are enriched in acidic residues. The chain crosses the membrane as a helical; Signal-anchor for type II membrane protein span at residues 52–72 (VGGLPGAWARLLAGLLLLAVS). At 73–497 (SSLALRQLHS…PSGCCPFQGY (425 aa)) the chain is on the extracellular side. N-linked (GlcNAc...) asparagine glycans are attached at residues asparagine 164, asparagine 169, asparagine 367, and asparagine 378.

The protein belongs to the gamma-glutamyltransferase family. As to quaternary structure, heterodimer composed of the light and heavy chains. The active site is located in the light chain. Post-translationally, cleaved by autocatalysis into a large and a small subunit and the autocatalytic cleavage is essential to the functional activation of the enzyme.

The protein resides in the membrane. The catalysed reaction is an N-terminal (5-L-glutamyl)-[peptide] + an alpha-amino acid = 5-L-glutamyl amino acid + an N-terminal L-alpha-aminoacyl-[peptide]. It carries out the reaction glutathione + H2O = L-cysteinylglycine + L-glutamate. It catalyses the reaction an S-substituted glutathione + H2O = an S-substituted L-cysteinylglycine + L-glutamate. Its pathway is sulfur metabolism; glutathione metabolism. Functionally, hydrolyzes and transfers gamma-glutamyl moieties from glutathione and other gamma-glutamyl compounds to acceptors. In Mus musculus (Mouse), this protein is Glutathione hydrolase 6.